A 770-amino-acid chain; its full sequence is Elongation factor G, mitochondrial (770 aa).

Residues 1 to 24 (MLKLSFRSLTSRLPRLSTLVVRGY) constitute a mitochondrion transit peptide. Residues 57–353 (KQIRNIGISA…AVCDYLPNPS (297 aa)) enclose the tr-type G domain. GTP-binding positions include 66–73 (AHIDSGKT), 151–155 (DTPGH), and 205–208 (NKMD).

This sequence belongs to the TRAFAC class translation factor GTPase superfamily. Classic translation factor GTPase family. EF-G/EF-2 subfamily.

The protein localises to the mitochondrion. It functions in the pathway protein biosynthesis; polypeptide chain elongation. Its function is as follows. Mitochondrial GTPase that catalyzes the GTP-dependent ribosomal translocation step during translation elongation. During this step, the ribosome changes from the pre-translocational (PRE) to the post-translocational (POST) state as the newly formed A-site-bound peptidyl-tRNA and P-site-bound deacylated tRNA move to the P and E sites, respectively. Catalyzes the coordinated movement of the two tRNA molecules, the mRNA and conformational changes in the ribosome. The sequence is that of Elongation factor G, mitochondrial (mef1) from Schizosaccharomyces pombe (strain 972 / ATCC 24843) (Fission yeast).